Here is a 199-residue protein sequence, read N- to C-terminus: DnaJ homolog subfamily C member 5B (199 aa).

Phosphoserine occurs at positions 14 and 16. The J domain maps to 19–84; sequence ALYEILGLQK…SKRNIYDKYG (66 aa).

In terms of assembly, interacts with the chaperone complex consisting of HSC70 and SGTA. Post-translationally, palmitoylated.

Its subcellular location is the membrane. The polypeptide is DnaJ homolog subfamily C member 5B (DNAJC5B) (Ailuropoda melanoleuca (Giant panda)).